A 320-amino-acid chain; its full sequence is Ferrochelatase (320 aa).

Positions 194 and 275 each coordinate Fe cation.

It belongs to the ferrochelatase family. In terms of assembly, monomer.

The protein resides in the cytoplasm. It carries out the reaction heme b + 2 H(+) = protoporphyrin IX + Fe(2+). Its pathway is porphyrin-containing compound metabolism; protoheme biosynthesis; protoheme from protoporphyrin-IX: step 1/1. Functionally, catalyzes the ferrous insertion into protoporphyrin IX. This Salmonella dublin (strain CT_02021853) protein is Ferrochelatase.